Reading from the N-terminus, the 148-residue chain is SsrA-binding protein (148 aa).

Over residues lysine 127–arginine 142 the composition is skewed to basic and acidic residues. The tract at residues lysine 127–threonine 148 is disordered.

It belongs to the SmpB family.

The protein localises to the cytoplasm. Functionally, required for rescue of stalled ribosomes mediated by trans-translation. Binds to transfer-messenger RNA (tmRNA), required for stable association of tmRNA with ribosomes. tmRNA and SmpB together mimic tRNA shape, replacing the anticodon stem-loop with SmpB. tmRNA is encoded by the ssrA gene; the 2 termini fold to resemble tRNA(Ala) and it encodes a 'tag peptide', a short internal open reading frame. During trans-translation Ala-aminoacylated tmRNA acts like a tRNA, entering the A-site of stalled ribosomes, displacing the stalled mRNA. The ribosome then switches to translate the ORF on the tmRNA; the nascent peptide is terminated with the 'tag peptide' encoded by the tmRNA and targeted for degradation. The ribosome is freed to recommence translation, which seems to be the essential function of trans-translation. The chain is SsrA-binding protein from Aromatoleum aromaticum (strain DSM 19018 / LMG 30748 / EbN1) (Azoarcus sp. (strain EbN1)).